Here is an 819-residue protein sequence, read N- to C-terminus: DNA topoisomerase 4 subunit A (819 aa).

In terms of domain architecture, Topo IIA-type catalytic spans 30-496 (LPDIRDGLKP…QIIEIDTASL (467 aa)). Tyrosine 118 acts as the O-(5'-phospho-DNA)-tyrosine intermediate in catalysis.

This sequence belongs to the type II topoisomerase GyrA/ParC subunit family. ParC type 2 subfamily. As to quaternary structure, heterotetramer composed of ParC and ParE.

It localises to the cell membrane. It catalyses the reaction ATP-dependent breakage, passage and rejoining of double-stranded DNA.. Topoisomerase IV is essential for chromosome segregation. It relaxes supercoiled DNA. Performs the decatenation events required during the replication of a circular DNA molecule. The polypeptide is DNA topoisomerase 4 subunit A (Streptococcus pyogenes serotype M3 (strain ATCC BAA-595 / MGAS315)).